Reading from the N-terminus, the 143-residue chain is Large ribosomal subunit protein uL15 (143 aa).

Residues 20–52 (GRGIGSGKGKTAGRGHKGQHSRAGGYHKVGFEG) form a disordered region. The span at 30 to 39 (TAGRGHKGQH) shows a compositional bias: basic residues.

Belongs to the universal ribosomal protein uL15 family. In terms of assembly, part of the 50S ribosomal subunit.

Binds to the 23S rRNA. The polypeptide is Large ribosomal subunit protein uL15 (Coxiella burnetii (strain CbuG_Q212) (Coxiella burnetii (strain Q212))).